Here is a 178-residue protein sequence, read N- to C-terminus: Large ribosomal subunit protein uL16 (178 aa).

This sequence belongs to the universal ribosomal protein uL16 family.

The chain is Large ribosomal subunit protein uL16 from Pyrobaculum calidifontis (strain DSM 21063 / JCM 11548 / VA1).